Here is a 268-residue protein sequence, read N- to C-terminus: 4-hydroxy-tetrahydrodipicolinate reductase (268 aa).

NAD(+) is bound by residues 10-15, Asp36, 99-101, and 123-126; these read GASGRM, GTT, and APNM. His156 (proton donor/acceptor) is an active-site residue. His157 provides a ligand contact to (S)-2,3,4,5-tetrahydrodipicolinate. Lys160 (proton donor) is an active-site residue. 166 to 167 serves as a coordination point for (S)-2,3,4,5-tetrahydrodipicolinate; that stretch reads GT.

This sequence belongs to the DapB family.

It localises to the cytoplasm. It catalyses the reaction (S)-2,3,4,5-tetrahydrodipicolinate + NAD(+) + H2O = (2S,4S)-4-hydroxy-2,3,4,5-tetrahydrodipicolinate + NADH + H(+). It carries out the reaction (S)-2,3,4,5-tetrahydrodipicolinate + NADP(+) + H2O = (2S,4S)-4-hydroxy-2,3,4,5-tetrahydrodipicolinate + NADPH + H(+). The protein operates within amino-acid biosynthesis; L-lysine biosynthesis via DAP pathway; (S)-tetrahydrodipicolinate from L-aspartate: step 4/4. Catalyzes the conversion of 4-hydroxy-tetrahydrodipicolinate (HTPA) to tetrahydrodipicolinate. This chain is 4-hydroxy-tetrahydrodipicolinate reductase, found in Janthinobacterium sp. (strain Marseille) (Minibacterium massiliensis).